The sequence spans 699 residues: Polyribonucleotide nucleotidyltransferase (699 aa).

Aspartate 485 and aspartate 491 together coordinate Mg(2+). The KH domain maps to 552–611 (PRITTIKINPEKIRDVIGKGGAVIRALTEETGTTIELEDDGTVKIASNNGDATREAIRRI). The S1 motif domain occupies 621–689 (GRLYTGKVIR…RQGRVRLSIK (69 aa)).

This sequence belongs to the polyribonucleotide nucleotidyltransferase family. Component of the RNA degradosome, which is a multiprotein complex involved in RNA processing and mRNA degradation. Mg(2+) serves as cofactor.

The protein resides in the cytoplasm. It catalyses the reaction RNA(n+1) + phosphate = RNA(n) + a ribonucleoside 5'-diphosphate. Involved in mRNA degradation. Catalyzes the phosphorolysis of single-stranded polyribonucleotides processively in the 3'- to 5'-direction. This is Polyribonucleotide nucleotidyltransferase from Shewanella amazonensis (strain ATCC BAA-1098 / SB2B).